A 291-amino-acid chain; its full sequence is Undecaprenyl-diphosphatase (291 aa).

The next 8 membrane-spanning stretches (helical) occupy residues 1–21 (MFIIELIKGIILGVVEGLTEF), 48–68 (SAFTFKIVIQLGSVFAAAWVF), 102–122 (LHVLVGMVPAGILGLLFDDFI), 126–146 (LFSVPTVMIGLFVGAIYMIIA), 162–182 (ISYFQAFVIGISQAVAMWPGF), 203–223 (SDFTFIMAVPIMLAASGLSLL), 231–251 (IADIPFYILGFLAAFTVGLIA), and 267–287 (FAIYRIVLVIFIAILYFGFGI).

Belongs to the UppP family.

Its subcellular location is the cell membrane. The enzyme catalyses di-trans,octa-cis-undecaprenyl diphosphate + H2O = di-trans,octa-cis-undecaprenyl phosphate + phosphate + H(+). Its function is as follows. Catalyzes the dephosphorylation of undecaprenyl diphosphate (UPP). Confers resistance to bacitracin. The protein is Undecaprenyl-diphosphatase of Staphylococcus aureus (strain USA300).